We begin with the raw amino-acid sequence, 236 residues long: Lectin (236 aa).

Asn-118 carries N-linked (GlcNAc...) asparagine glycosylation.

Belongs to the leguminous lectin family. In terms of assembly, homodimer of noncovalently associated chains.

Its function is as follows. D-mannose and D-glucose specific lectin. The protein is Lectin of Onobrychis viciifolia (Common sainfoin).